Here is a 119-residue protein sequence, read N- to C-terminus: MLLKSTTRHIRIYTAEIQNNELVESDNVLTLDVDPDNEFLWDEDSLQKVYRKFDDLVESYSGEDLTEYNLRRIGSDLELFIRSLLQQGEISYNLDSRVLNYSMGLPRVESPETEGKYRL.

This sequence belongs to the complex I NdhM subunit family. As to quaternary structure, NDH-1 can be composed of about 15 different subunits; different subcomplexes with different compositions have been identified which probably have different functions.

It localises to the cellular thylakoid membrane. The enzyme catalyses a plastoquinone + NADH + (n+1) H(+)(in) = a plastoquinol + NAD(+) + n H(+)(out). It catalyses the reaction a plastoquinone + NADPH + (n+1) H(+)(in) = a plastoquinol + NADP(+) + n H(+)(out). Functionally, NDH-1 shuttles electrons from an unknown electron donor, via FMN and iron-sulfur (Fe-S) centers, to quinones in the respiratory and/or the photosynthetic chain. The immediate electron acceptor for the enzyme in this species is believed to be plastoquinone. Couples the redox reaction to proton translocation, and thus conserves the redox energy in a proton gradient. Cyanobacterial NDH-1 also plays a role in inorganic carbon-concentration. This chain is NAD(P)H-quinone oxidoreductase subunit M, found in Gloeothece citriformis (strain PCC 7424) (Cyanothece sp. (strain PCC 7424)).